We begin with the raw amino-acid sequence, 86 residues long: MDPVDPNLEPWNHPGSQPKTACNRCHCKKCCYHCQVCFITKGLGISYGRKKRRQRRRPSQGGQTHQDPIPKQPSSQPRGNPTGPKE.

Residues 1–21 (MDPVDPNLEPWNHPGSQPKTA) form a disordered region. Residues 1-24 (MDPVDPNLEPWNHPGSQPKTACNR) form an interaction with human CREBBP region. The segment at 1-48 (MDPVDPNLEPWNHPGSQPKTACNRCHCKKCCYHCQVCFITKGLGISYG) is transactivation. 3 residues coordinate Zn(2+): C22, C25, and C27. The cysteine-rich stretch occupies residues 22-37 (CNRCHCKKCCYHCQVC). At K28 the chain carries N6-acetyllysine; by host PCAF. Residues C30, H33, C34, and C37 each coordinate Zn(2+). Residues 38–48 (FITKGLGISYG) form a core region. Residues 47-86 (YGRKKRRQRRRPSQGGQTHQDPIPKQPSSQPRGNPTGPKE) form a disordered region. The segment covering 48–58 (GRKKRRQRRRP) has biased composition (basic residues). The Nuclear localization signal, RNA-binding (TAR), and protein transduction signature appears at 49 to 57 (RKKRRQRRR). The segment at 49 to 86 (RKKRRQRRRPSQGGQTHQDPIPKQPSSQPRGNPTGPKE) is interaction with the host capping enzyme RNGTT. An N6-acetyllysine; by host EP300 and GCN5L2 mark is found at K50 and K51. R52 and R53 each carry asymmetric dimethylarginine; by host PRMT6. Over residues 60–79 (QGGQTHQDPIPKQPSSQPRG) the composition is skewed to polar residues. K71 is covalently cross-linked (Glycyl lysine isopeptide (Lys-Gly) (interchain with G-Cter in ubiquitin)).

This sequence belongs to the lentiviruses Tat family. As to quaternary structure, interacts with host CCNT1. Associates with the P-TEFb complex composed at least of Tat, P-TEFb (CDK9 and CCNT1), TAR RNA, RNA Pol II. Recruits the HATs CREBBP, TAF1/TFIID, EP300, PCAF and GCN5L2. Interacts with host KAT5/Tip60; this interaction targets the latter to degradation. Interacts with the host deacetylase SIRT1. Interacts with host capping enzyme RNGTT; this interaction stimulates RNGTT. Binds to host KDR, and to the host integrins ITGAV/ITGB3 and ITGA5/ITGB1. Interacts with host KPNB1/importin beta-1 without previous binding to KPNA1/importin alpha-1. Interacts with EIF2AK2. Interacts with host nucleosome assembly protein NAP1L1; this interaction may be required for the transport of Tat within the nucleus, since the two proteins interact at the nuclear rim. Interacts with host C1QBP/SF2P32; this interaction involves lysine-acetylated Tat. Interacts with the host chemokine receptors CCR2, CCR3 and CXCR4. Interacts with host DPP4/CD26; this interaction may trigger an anti-proliferative effect. Interacts with host LDLR. Interacts with the host extracellular matrix metalloproteinase MMP1. Interacts with host PRMT6; this interaction mediates Tat's methylation. Interacts with, and is ubiquitinated by MDM2/Hdm2. Interacts with host PSMC3 and HTATIP2. Interacts with STAB1; this interaction may overcome SATB1-mediated repression of IL2 and IL2RA (interleukin) in T cells by binding to the same domain than HDAC1. Interacts (when acetylated) with human CDK13, thereby increasing HIV-1 mRNA splicing and promoting the production of the doubly spliced HIV-1 protein Nef. Interacts with host TBP; this interaction modulates the activity of transcriptional pre-initiation complex. Interacts with host RELA. Interacts with host PLSCR1; this interaction negatively regulates Tat transactivation activity by altering its subcellular distribution. In terms of processing, asymmetrical arginine methylation by host PRMT6 seems to diminish the transactivation capacity of Tat and affects the interaction with host CCNT1. Acetylation by EP300, CREBBP, GCN5L2/GCN5 and PCAF regulates the transactivation activity of Tat. EP300-mediated acetylation of Lys-50 promotes dissociation of Tat from the TAR RNA through the competitive binding to PCAF's bromodomain. In addition, the non-acetylated Tat's N-terminus can also interact with PCAF. PCAF-mediated acetylation of Lys-28 enhances Tat's binding to CCNT1. Lys-50 is deacetylated by SIRT1. Post-translationally, polyubiquitination by host MDM2 does not target Tat to degradation, but activates its transactivation function and fosters interaction with CCNT1 and TAR RNA. In terms of processing, phosphorylated by EIF2AK2 on serine and threonine residues adjacent to the basic region important for TAR RNA binding and function. Phosphorylation of Tat by EIF2AK2 is dependent on the prior activation of EIF2AK2 by dsRNA.

Its subcellular location is the host nucleus. It localises to the host nucleolus. It is found in the host cytoplasm. The protein resides in the secreted. Transcriptional activator that increases RNA Pol II processivity, thereby increasing the level of full-length viral transcripts. Recognizes a hairpin structure at the 5'-LTR of the nascent viral mRNAs referred to as the transactivation responsive RNA element (TAR) and recruits the cyclin T1-CDK9 complex (P-TEFb complex) that will in turn hyperphosphorylate the RNA polymerase II to allow efficient elongation. The CDK9 component of P-TEFb and other Tat-activated kinases hyperphosphorylate the C-terminus of RNA Pol II that becomes stabilized and much more processive. Other factors such as HTATSF1/Tat-SF1, SUPT5H/SPT5, and HTATIP2 are also important for Tat's function. Besides its effect on RNA Pol II processivity, Tat induces chromatin remodeling of proviral genes by recruiting the histone acetyltransferases (HATs) CREBBP, EP300 and PCAF to the chromatin. This also contributes to the increase in proviral transcription rate, especially when the provirus integrates in transcriptionally silent region of the host genome. To ensure maximal activation of the LTR, Tat mediates nuclear translocation of NF-kappa-B by interacting with host RELA. Through its interaction with host TBP, Tat may also modulate transcription initiation. Tat can reactivate a latently infected cell by penetrating in it and transactivating its LTR promoter. In the cytoplasm, Tat is thought to act as a translational activator of HIV-1 mRNAs. In terms of biological role, extracellular circulating Tat can be endocytosed by surrounding uninfected cells via the binding to several surface receptors such as CD26, CXCR4, heparan sulfate proteoglycans (HSPG) or LDLR. Neurons are rarely infected, but they internalize Tat via their LDLR. Through its interaction with nuclear HATs, Tat is potentially able to control the acetylation-dependent cellular gene expression. Modulates the expression of many cellular genes involved in cell survival, proliferation or in coding for cytokines or cytokine receptors. Tat plays a role in T-cell and neurons apoptosis. Tat induced neurotoxicity and apoptosis probably contribute to neuroAIDS. Circulating Tat also acts as a chemokine-like and/or growth factor-like molecule that binds to specific receptors on the surface of the cells, affecting many cellular pathways. In the vascular system, Tat binds to ITGAV/ITGB3 and ITGA5/ITGB1 integrins dimers at the surface of endothelial cells and competes with bFGF for heparin-binding sites, leading to an excess of soluble bFGF. The protein is Protein Tat of Homo sapiens (Human).